Here is a 237-residue protein sequence, read N- to C-terminus: tRNA (guanine-N(1)-)-methyltransferase (237 aa).

S-adenosyl-L-methionine is bound by residues Gly-112 and 132–137 (IGDFVL).

The protein belongs to the RNA methyltransferase TrmD family. Homodimer.

It is found in the cytoplasm. It catalyses the reaction guanosine(37) in tRNA + S-adenosyl-L-methionine = N(1)-methylguanosine(37) in tRNA + S-adenosyl-L-homocysteine + H(+). Specifically methylates guanosine-37 in various tRNAs. In Thermosynechococcus vestitus (strain NIES-2133 / IAM M-273 / BP-1), this protein is tRNA (guanine-N(1)-)-methyltransferase.